Reading from the N-terminus, the 61-residue chain is Potassium channel toxin alpha-KTx 5.3 (61 aa).

Residues 1–28 form the signal peptide; sequence MHNYYKIVLIMVAFFAVIITFSNIQVEG. 3 cysteine pairs are disulfide-bonded: Cys-31/Cys-49, Cys-36/Cys-54, and Cys-40/Cys-56. A [R/K]XCQ motif region spans residues 34–37; that stretch reads KRCQ. Residue His-59 is modified to Histidine amide.

It belongs to the short scorpion toxin superfamily. Potassium channel inhibitor family. Alpha-KTx 05 subfamily. In terms of tissue distribution, expressed by the venom gland.

It is found in the secreted. Functionally, blocks small conductance calcium-activated potassium channels (KCNN, SK). Has also been shown to weakly inhibit Kv11.1/KCNH2/ERG1, Kv1.2/KCNA2, Kv1.3/KCNA3 and Kv2.1/KCNB1 voltage-gated potassium channels. The sequence is that of Potassium channel toxin alpha-KTx 5.3 from Olivierus martensii (Manchurian scorpion).